The chain runs to 162 residues: Protein NrdI (162 aa).

This sequence belongs to the NrdI family.

In terms of biological role, probably involved in ribonucleotide reductase function. The chain is Protein NrdI from Streptococcus pyogenes serotype M28 (strain MGAS6180).